A 467-amino-acid polypeptide reads, in one-letter code: Septin-10 (467 aa).

Positions 63–329 constitute a Septin-type G domain; the sequence is QGFCFNILCV…ELYRRCKLEE (267 aa). Residues 73–80 form a G1 motif region; it reads GETGIGKS. GTP contacts are provided by residues 73-80, glycine 128, 209-217, glycine 263, and arginine 278; these read GETGIGKS and KADTVSKTE. The segment at 125 to 128 is G3 motif; it reads NTVG. Positions 208–211 are G4 motif; sequence AKAD.

The protein belongs to the TRAFAC class TrmE-Era-EngA-EngB-Septin-like GTPase superfamily. Septin GTPase family. In terms of assembly, septins polymerize into heterooligomeric protein complexes that form filaments, and can associate with cellular membranes, actin filaments and microtubules. GTPase activity is required for filament formation. Interacts with ADGB. Proteolytically cleaved in vitro in a calmodulin-dependent manner.

It localises to the cytoplasm. The protein resides in the cytoskeleton. The protein localises to the cell projection. Its subcellular location is the cilium. It is found in the flagellum. In terms of biological role, filament-forming cytoskeletal GTPase. May play a role in cytokinesis (Potential). The polypeptide is Septin-10 (Pongo abelii (Sumatran orangutan)).